The sequence spans 173 residues: Large ribosomal subunit protein bL9 (173 aa).

A disordered region spans residues 151 to 173; the sequence is YDDTPDRTETEESTKELQEEHAE.

Belongs to the bacterial ribosomal protein bL9 family.

Its function is as follows. Binds to the 23S rRNA. The sequence is that of Large ribosomal subunit protein bL9 from Lawsonia intracellularis (strain PHE/MN1-00).